A 369-amino-acid chain; its full sequence is Dihydroorotate dehydrogenase (quinone) (369 aa).

FMN contacts are provided by residues 76–80 and threonine 100; that span reads AGLDK. Lysine 80 contacts substrate. Substrate is bound at residue 125–129; the sequence is NRMGF. FMN contacts are provided by asparagine 154 and asparagine 187. Asparagine 187 provides a ligand contact to substrate. Serine 190 (nucleophile) is an active-site residue. Substrate is bound at residue asparagine 192. FMN-binding residues include lysine 232 and serine 260. Position 261–262 (261–262) interacts with substrate; that stretch reads NT. Residues glycine 282, glycine 311, and 332–333 each bind FMN; that span reads YS.

The protein belongs to the dihydroorotate dehydrogenase family. Type 2 subfamily. As to quaternary structure, monomer. Requires FMN as cofactor.

The protein localises to the cell membrane. The enzyme catalyses (S)-dihydroorotate + a quinone = orotate + a quinol. Its pathway is pyrimidine metabolism; UMP biosynthesis via de novo pathway; orotate from (S)-dihydroorotate (quinone route): step 1/1. Functionally, catalyzes the conversion of dihydroorotate to orotate with quinone as electron acceptor. The sequence is that of Dihydroorotate dehydrogenase (quinone) (pyrD) from Deinococcus radiodurans (strain ATCC 13939 / DSM 20539 / JCM 16871 / CCUG 27074 / LMG 4051 / NBRC 15346 / NCIMB 9279 / VKM B-1422 / R1).